A 168-amino-acid chain; its full sequence is ATP synthase subunit b (168 aa).

A helical transmembrane segment spans residues 11–31; the sequence is EISIINTLWYLIVFSILLLAV.

The protein belongs to the ATPase B chain family. F-type ATPases have 2 components, F(1) - the catalytic core - and F(0) - the membrane proton channel. F(1) has five subunits: alpha(3), beta(3), gamma(1), delta(1), epsilon(1). F(0) has three main subunits: a(1), b(2) and c(10-14). The alpha and beta chains form an alternating ring which encloses part of the gamma chain. F(1) is attached to F(0) by a central stalk formed by the gamma and epsilon chains, while a peripheral stalk is formed by the delta and b chains.

The protein resides in the cell membrane. Functionally, f(1)F(0) ATP synthase produces ATP from ADP in the presence of a proton or sodium gradient. F-type ATPases consist of two structural domains, F(1) containing the extramembraneous catalytic core and F(0) containing the membrane proton channel, linked together by a central stalk and a peripheral stalk. During catalysis, ATP synthesis in the catalytic domain of F(1) is coupled via a rotary mechanism of the central stalk subunits to proton translocation. Component of the F(0) channel, it forms part of the peripheral stalk, linking F(1) to F(0). In Lactobacillus delbrueckii subsp. bulgaricus (strain ATCC 11842 / DSM 20081 / BCRC 10696 / JCM 1002 / NBRC 13953 / NCIMB 11778 / NCTC 12712 / WDCM 00102 / Lb 14), this protein is ATP synthase subunit b.